A 198-amino-acid polypeptide reads, in one-letter code: Suppressor of cytokine signaling 2 (198 aa).

Positions 1–29 (MTLRCLEPSGNGGEGTRSQWGTAGSAEEP) are disordered. Residues 1–75 (MTLRCLEPSG…PEGTFLIRDS (75 aa)) form an interaction with AREL1 region. Residue Ser30 is modified to Phosphoserine. Residues 48–156 (WYWGSMTVNE…TVHLYLTKPL (109 aa)) form the SH2 domain. Ser52 is subject to Phosphoserine; by PKC. Positions 151–197 (YLTKPLYTSAPSLQHLCRLTINKCTGAIWGLPLPTRLKDYLEEYKFQ) constitute an SOCS box domain. Lys173 is covalently cross-linked (Glycyl lysine isopeptide (Lys-Gly) (interchain with G-Cter in ubiquitin)).

As to quaternary structure, substrate-recognition component of the ECS(SOCS2) complex, composed of SOCS2, CUL5, ELOB, ELOC and RNF7/RBX2. Interacts with IGF1R. Interacts with DCUN1D1. Ubiquitinated; mediated by AREL1 and leading to its subsequent proteasomal degradation. Ubiquitination is dependent on its phosphorylation at Ser-52, by PKC. Ubiquitination is stimulated by LPS. In terms of processing, phosphorylation at Ser-52 by PKC facilitates its ubiquitination and proteasomal degradation. High expression in heart, placenta, lung, kidney and prostate. Predominantly expressed in pulmonary epithelia cells, specifically type II pneumocytes.

The protein localises to the cytoplasm. Its pathway is protein modification; protein ubiquitination. Substrate-binding is prevented by the covalent inhibitor MN551 that cross-links with Cys-111. Also inhibited by a MN551 derivative, MN714, which contains a pivaloyloxymethyl that allows cell permeability. Its function is as follows. Substrate-recognition component of a cullin-5-RING E3 ubiquitin-protein ligase complex (ECS complex, also named CRL5 complex), which mediates the ubiquitination and subsequent proteasomal degradation of target proteins, such as EPOR and GHR. Specifically recognizes and binds phosphorylated proteins via its SH2 domain, promoting their ubiquitination. The ECS(SOCS2) complex acts as a key regulator of growth hormone receptor (GHR) levels by mediating ubiquitination and degradation of GHR, following GHR phosphorylation by JAK2. The ECS(SOCS2) also catalyzes ubiquitination and degradation of JAK2-phosphorylated EPOR. The sequence is that of Suppressor of cytokine signaling 2 from Homo sapiens (Human).